The following is a 676-amino-acid chain: UvrABC system protein B (676 aa).

The 389-residue stretch at 26–414 folds into the Helicase ATP-binding domain; sequence EGLDAGLAHQ…SAGEIADQVV (389 aa). 39 to 46 is a binding site for ATP; sequence GVTGSGKT. The Beta-hairpin signature appears at 92–115; it reads YYDYYQPEAYVPTTDTFIEKDSSV. The 167-residue stretch at 432–598 folds into the Helicase C-terminal domain; the sequence is QVDDLLSEIR…ALKRNIKDIM (167 aa). In terms of domain architecture, UVR spans 636–671; the sequence is EKEITKLEAQMYKHAQDLEFELAAQKRDEIEKLRQQ.

The protein belongs to the UvrB family. As to quaternary structure, forms a heterotetramer with UvrA during the search for lesions. Interacts with UvrC in an incision complex.

The protein localises to the cytoplasm. The UvrABC repair system catalyzes the recognition and processing of DNA lesions. A damage recognition complex composed of 2 UvrA and 2 UvrB subunits scans DNA for abnormalities. Upon binding of the UvrA(2)B(2) complex to a putative damaged site, the DNA wraps around one UvrB monomer. DNA wrap is dependent on ATP binding by UvrB and probably causes local melting of the DNA helix, facilitating insertion of UvrB beta-hairpin between the DNA strands. Then UvrB probes one DNA strand for the presence of a lesion. If a lesion is found the UvrA subunits dissociate and the UvrB-DNA preincision complex is formed. This complex is subsequently bound by UvrC and the second UvrB is released. If no lesion is found, the DNA wraps around the other UvrB subunit that will check the other stand for damage. The chain is UvrABC system protein B from Vibrio vulnificus (strain CMCP6).